We begin with the raw amino-acid sequence, 1228 residues long: Calcium-transporting ATPase (1228 aa).

The Cytoplasmic portion of the chain corresponds to 1 to 63 (MEEVIKNAHT…FELILNQFDD (63 aa)). The helical transmembrane segment at 64 to 81 (LLVKILLLAAFISFVLTL) threads the bilayer. Topologically, residues 82–92 (LDMKHKKIEIC) are extracellular. The chain crosses the membrane as a helical span at residues 93–112 (DFIEPLVIVLILILNAAVGV). Topologically, residues 113–270 (WQECNAEKSL…IDLFGQQLSK (158 aa)) are cytoplasmic. The helical transmembrane segment at 271–291 (IIFVICVTVWIINFKHFSDPI) threads the bilayer. The Extracellular segment spans residues 292–300 (HGSFLYGCL). Residues 301–321 (YYFKISVALAVAAIPEGLPAV) form a helical membrane-spanning segment. At 322 to 974 (ITTCLALGTR…IYNNMKAFIR (653 aa)) the chain is on the cytoplasmic side. The 4-aspartylphosphate intermediate role is filled by aspartate 358. Disordered stretches follow at residues 452–478 (MKNDLNNNNNNNNNSSRSGAKRNIPLK) and 562–613 (MPAE…LKNA). Over residues 589-604 (FFSSKNDNSHITSTLN) the composition is skewed to polar residues. Residue lysine 716 participates in ATP binding. A helical membrane pass occupies residues 975–994 (YLISSNIGEVASIFITALLG). The Extracellular portion of the chain corresponds to 995-1000 (IPDSLA). A helical membrane pass occupies residues 1001 to 1021 (PVQLLWVNLVTDGLPATALGF). Residues 1022 to 1042 (NPPEHDVMKCKPRHKNDNLIN) are Cytoplasmic-facing. A helical transmembrane segment spans residues 1043–1067 (GLTLLRYIIIGTYVGIATVSIFVYW). Over 1068–1118 (FLFYPDSDMHTLINFYQLSHYNQCKAWNNFRVNKVYDMSEDHCSYFSAGKI) the chain is Extracellular. Residues 1119–1140 (KASTLSLSVLVLIEMFNALNAL) traverse the membrane as a helical segment. The Cytoplasmic portion of the chain corresponds to 1141–1151 (SEYNSLFEIPP). A helical transmembrane segment spans residues 1152–1172 (WRNMYLVLATIGSLLLHVLIL). Topologically, residues 1173 to 1185 (YIPPLARIFGVVP) are extracellular. A helical membrane pass occupies residues 1186–1206 (LSAYDWFLVFLWSFPVIILDE). Over 1207–1228 (IIKFYAKRKLKEEQRTKKIKID) the chain is Cytoplasmic.

This sequence belongs to the cation transport ATPase (P-type) (TC 3.A.3) family.

It localises to the membrane. It catalyses the reaction Ca(2+)(in) + ATP + H2O = Ca(2+)(out) + ADP + phosphate + H(+). This magnesium-dependent enzyme catalyzes the hydrolysis of ATP coupled with the transport of the calcium. The protein is Calcium-transporting ATPase (ATP6) of Plasmodium falciparum (isolate K1 / Thailand).